The sequence spans 112 residues: MQDTGSVVPLHWFGFGYAALVASGGIIGYVKAGSVPSLAAGLLFGSLAGLGAYQLSQDPRNVWVFLATSGTLAGIMGMRFYHSGKFMPAGLIAGASLLMVAKVGVSMFNRPH.

A run of 4 helical transmembrane segments spans residues 7-27 (VVPL…GGII), 32-52 (AGSV…GLGA), 62-82 (VWVF…RFYH), and 88-108 (PAGL…VSMF).

It belongs to the TMEM14 family.

The protein localises to the mitochondrion membrane. Required for normal heme biosynthesis. This Homo sapiens (Human) protein is Transmembrane protein 14C (TMEM14C).